Here is a 495-residue protein sequence, read N- to C-terminus: Acyltransferase abl6 (495 aa).

Catalysis depends on His-171, which acts as the Proton acceptor.

The protein belongs to the plant acyltransferase family.

Functionally, acyltransferase; part of the gene cluster that mediates the biosynthesis of abscisic acid (ABA), a phytohormone that acts antagonistically toward salicylic acid (SA), jasmonic acid (JA) and ethylene (ETH) signaling, to impede plant defense responses. The first step of the pathway catalyzes the reaction from farnesyl diphosphate to alpha-ionylideneethane performed by the alpha-ionylideneethane synthase abl3 via a three-step reaction mechanism involving 2 neutral intermediates, beta-farnesene and allofarnesene. The cytochrome P450 monooxygenase abl1 might then be involved in the conversion of alpha-ionylideneethane to alpha-ionylideneacetic acid. Alpha-ionylideneacetic acid is further converted to abscisic acid in 2 steps involving the cytochrome P450 monooxygenase abl2 and the short-chain dehydrogenase/reductase abl4, via the intermediates 1'-deoxy-ABA or 1',4'-trans-diol-ABA, depending on the order of action of these 2 enzymes. Abl2 is responsible for the hydroxylation of carbon atom C-1' and abl4 might be involved in the oxidation of the C-4' carbon atom. The acyltransferase abl6 seems not essential for the biosynthesis of ABA, but it may acetylate ABA as part of the synthesis of another ABA-related molecule. The polypeptide is Acyltransferase abl6 (Leptosphaeria maculans (strain JN3 / isolate v23.1.3 / race Av1-4-5-6-7-8) (Blackleg fungus)).